We begin with the raw amino-acid sequence, 380 residues long: Queuine tRNA-ribosyltransferase (380 aa).

The active-site Proton acceptor is aspartate 96. Residues 96–100 (DSGGF), aspartate 150, glutamine 193, and glycine 220 each bind substrate. An RNA binding region spans residues 251-257 (GVGAPDS). Aspartate 270 (nucleophile) is an active-site residue. The interval 275–279 (TRIAR) is RNA binding; important for wobble base 34 recognition. 4 residues coordinate Zn(2+): cysteine 308, cysteine 310, cysteine 313, and histidine 339.

This sequence belongs to the queuine tRNA-ribosyltransferase family. In terms of assembly, homodimer. Within each dimer, one monomer is responsible for RNA recognition and catalysis, while the other monomer binds to the replacement base PreQ1. Requires Zn(2+) as cofactor.

The catalysed reaction is 7-aminomethyl-7-carbaguanine + guanosine(34) in tRNA = 7-aminomethyl-7-carbaguanosine(34) in tRNA + guanine. Its pathway is tRNA modification; tRNA-queuosine biosynthesis. Catalyzes the base-exchange of a guanine (G) residue with the queuine precursor 7-aminomethyl-7-deazaguanine (PreQ1) at position 34 (anticodon wobble position) in tRNAs with GU(N) anticodons (tRNA-Asp, -Asn, -His and -Tyr). Catalysis occurs through a double-displacement mechanism. The nucleophile active site attacks the C1' of nucleotide 34 to detach the guanine base from the RNA, forming a covalent enzyme-RNA intermediate. The proton acceptor active site deprotonates the incoming PreQ1, allowing a nucleophilic attack on the C1' of the ribose to form the product. After dissociation, two additional enzymatic reactions on the tRNA convert PreQ1 to queuine (Q), resulting in the hypermodified nucleoside queuosine (7-(((4,5-cis-dihydroxy-2-cyclopenten-1-yl)amino)methyl)-7-deazaguanosine). The polypeptide is Queuine tRNA-ribosyltransferase (Streptococcus thermophilus (strain ATCC BAA-491 / LMD-9)).